We begin with the raw amino-acid sequence, 551 residues long: 2-(3-amino-3-carboxypropyl)histidine synthase subunit 2 (551 aa).

Residues Cys116, Cys137, and Cys371 each contribute to the [4Fe-4S] cluster site.

This sequence belongs to the DPH1/DPH2 family. DPH2 subfamily. As to quaternary structure, component of the 2-(3-amino-3-carboxypropyl)histidine synthase complex composed of DPH1, DPH2, DPH3 and a NADH-dependent reductase, predominantly CBR1. It depends on [4Fe-4S] cluster as a cofactor.

The protein resides in the cytoplasm. The protein operates within protein modification; peptidyl-diphthamide biosynthesis. In terms of biological role, required for the first step of diphthamide biosynthesis, a post-translational modification of histidine which occurs in elongation factor 2. DPH1 and DPH2 transfer a 3-amino-3-carboxypropyl (ACP) group from S-adenosyl-L-methionine (SAM) to a histidine residue, the reaction is assisted by a reduction system comprising DPH3 and a NADH-dependent reductase, predominantly CBR1. Facilitates the reduction of the catalytic iron-sulfur cluster found in the DPH1 subunit. The chain is 2-(3-amino-3-carboxypropyl)histidine synthase subunit 2 (DPH2) from Candida glabrata (strain ATCC 2001 / BCRC 20586 / JCM 3761 / NBRC 0622 / NRRL Y-65 / CBS 138) (Yeast).